A 136-amino-acid chain; its full sequence is Large ribosomal subunit protein bL17 (136 aa).

Belongs to the bacterial ribosomal protein bL17 family. As to quaternary structure, part of the 50S ribosomal subunit. Contacts protein L32.

This chain is Large ribosomal subunit protein bL17, found in Rickettsia canadensis (strain McKiel).